We begin with the raw amino-acid sequence, 616 residues long: tRNA 5-methylaminomethyl-2-thiouridine biosynthesis bifunctional protein MnmC (616 aa).

The interval 1–232 (MLRTIVPARL…KRHCMSARFA (232 aa)) is tRNA (mnm(5)s(2)U34)-methyltransferase. The segment at 249–616 (IGGGVAGAAA…ARFAGNRKTA (368 aa)) is FAD-dependent cmnm(5)s(2)U34 oxidoreductase.

This sequence in the N-terminal section; belongs to the methyltransferase superfamily. tRNA (mnm(5)s(2)U34)-methyltransferase family. The protein in the C-terminal section; belongs to the DAO family. It depends on FAD as a cofactor.

It localises to the cytoplasm. It catalyses the reaction 5-aminomethyl-2-thiouridine(34) in tRNA + S-adenosyl-L-methionine = 5-methylaminomethyl-2-thiouridine(34) in tRNA + S-adenosyl-L-homocysteine + H(+). In terms of biological role, catalyzes the last two steps in the biosynthesis of 5-methylaminomethyl-2-thiouridine (mnm(5)s(2)U) at the wobble position (U34) in tRNA. Catalyzes the FAD-dependent demodification of cmnm(5)s(2)U34 to nm(5)s(2)U34, followed by the transfer of a methyl group from S-adenosyl-L-methionine to nm(5)s(2)U34, to form mnm(5)s(2)U34. This Thiobacillus denitrificans (strain ATCC 25259 / T1) protein is tRNA 5-methylaminomethyl-2-thiouridine biosynthesis bifunctional protein MnmC.